Consider the following 194-residue polypeptide: Ion-translocating oxidoreductase complex subunit B (194 aa).

The tract at residues 1–26 is hydrophobic; the sequence is MSSILIAVIAIAALALVFGLILGFAS. The 4Fe-4S domain maps to 32–90; it reads ESDPIVEQIDAILPQTQCGQCGYPGCKPYAEAIANGDMINKCPPGGQATIEKLADLMGV. Positions 49, 52, 57, 73, 114, 117, 120, 124, 144, 147, 150, and 154 each coordinate [4Fe-4S] cluster. 2 4Fe-4S ferredoxin-type domains span residues 105 to 134 and 135 to 164; these read KVAFIHEDMCIGCTKCIQACPVDAIVGGTK and ALHTVIESECTGCDLCVAPCPTDCIEMIPV.

The protein belongs to the 4Fe4S bacterial-type ferredoxin family. RnfB subfamily. As to quaternary structure, the complex is composed of six subunits: RnfA, RnfB, RnfC, RnfD, RnfE and RnfG. Requires [4Fe-4S] cluster as cofactor.

It localises to the cell inner membrane. Part of a membrane-bound complex that couples electron transfer with translocation of ions across the membrane. In Aliivibrio fischeri (strain ATCC 700601 / ES114) (Vibrio fischeri), this protein is Ion-translocating oxidoreductase complex subunit B.